The sequence spans 376 residues: Erythronate-4-phosphate dehydrogenase (376 aa).

Substrate contacts are provided by S45 and T67. D147 provides a ligand contact to NAD(+). The active site involves R209. D233 lines the NAD(+) pocket. Residue E238 is part of the active site. H255 (proton donor) is an active-site residue. G258 provides a ligand contact to NAD(+). Residue Y259 coordinates substrate.

The protein belongs to the D-isomer specific 2-hydroxyacid dehydrogenase family. PdxB subfamily. In terms of assembly, homodimer.

Its subcellular location is the cytoplasm. The catalysed reaction is 4-phospho-D-erythronate + NAD(+) = (R)-3-hydroxy-2-oxo-4-phosphooxybutanoate + NADH + H(+). It functions in the pathway cofactor biosynthesis; pyridoxine 5'-phosphate biosynthesis; pyridoxine 5'-phosphate from D-erythrose 4-phosphate: step 2/5. Functionally, catalyzes the oxidation of erythronate-4-phosphate to 3-hydroxy-2-oxo-4-phosphonooxybutanoate. The protein is Erythronate-4-phosphate dehydrogenase of Shewanella sp. (strain ANA-3).